Reading from the N-terminus, the 325-residue chain is Protein FAM50B (325 aa).

The residue at position 2 (Ala-2) is an N-acetylalanine. The segment at 137–160 (RRAGNLGKNPDVDTSFLPDRDREE) is disordered.

The protein belongs to the FAM50 family.

The chain is Protein FAM50B (FAM50B) from Macaca fascicularis (Crab-eating macaque).